We begin with the raw amino-acid sequence, 525 residues long: Estrogen receptor (525 aa).

Residues 1–59 (PTSPLVFVPSSPRLSPFMHPPSHHYLETTSTPVYRSSVSSSQQQLSREDQCGTSDDSYS) are disordered. Residues 1–82 (PTSPLVFVPS…GFEMAKEMRF (82 aa)) form a modulating region. Residues 36–45 (SSVSSSQQQL) are compositionally biased toward low complexity. NR C4-type zinc fingers lie at residues 83–103 (CAVC…CEGC) and 119–143 (CPAT…LRKC). Positions 83–148 (CAVCSDYASG…RLRKCYQVGM (66 aa)) form a DNA-binding region, nuclear receptor. Residues 149–209 (MKGGVRKDRG…GGGKSSIIGM (61 aa)) are hinge. Basic and acidic residues predominate over residues 154–182 (RKDRGRVLRRDKRRTGTSDKASKDLEHRT). Residues 154–203 (RKDRGRVLRRDKRRTGTSDKASKDLEHRTAPPQDRRKHSSSSSSAGGGGK) are disordered. Positions 210–446 (SPDQVLLLLQ…DLLLEMLDAH (237 aa)) constitute an NR LBD domain. Basic and acidic residues predominate over residues 452–465 (DRPAESWSQADREP). Residues 452 to 525 (DRPAESWSQA…GPRSDCTHIL (74 aa)) form a disordered region. Gly residues predominate over residues 479-493 (SGGGDGGPSSAGSGS).

It belongs to the nuclear hormone receptor family. NR3 subfamily. As to quaternary structure, binds DNA as a homodimer. Can form a heterodimer with ER-beta. In terms of tissue distribution, abundant in the liver, less abundant in the testes and barely detectable in the ovary and brain.

It is found in the nucleus. The steroid hormones and their receptors are involved in the regulation of eukaryotic gene expression and affect cellular proliferation and differentiation in target tissues. The chain is Estrogen receptor (esr1) from Micropogonias undulatus (Atlantic croaker).